A 411-amino-acid chain; its full sequence is Serine hydroxymethyltransferase (411 aa).

Glycine 120 to leucine 122 serves as a coordination point for (6S)-5,6,7,8-tetrahydrofolate. At lysine 225 the chain carries N6-(pyridoxal phosphate)lysine. (6S)-5,6,7,8-tetrahydrofolate is bound by residues glutamate 241 and serine 350–phenylalanine 352.

It belongs to the SHMT family. Homodimer. Requires pyridoxal 5'-phosphate as cofactor.

The protein resides in the cytoplasm. It catalyses the reaction (6R)-5,10-methylene-5,6,7,8-tetrahydrofolate + glycine + H2O = (6S)-5,6,7,8-tetrahydrofolate + L-serine. Its pathway is one-carbon metabolism; tetrahydrofolate interconversion. It functions in the pathway amino-acid biosynthesis; glycine biosynthesis; glycine from L-serine: step 1/1. Catalyzes the reversible interconversion of serine and glycine with tetrahydrofolate (THF) serving as the one-carbon carrier. This reaction serves as the major source of one-carbon groups required for the biosynthesis of purines, thymidylate, methionine, and other important biomolecules. Also exhibits THF-independent aldolase activity toward beta-hydroxyamino acids, producing glycine and aldehydes, via a retro-aldol mechanism. This is Serine hydroxymethyltransferase from Limosilactobacillus fermentum (strain NBRC 3956 / LMG 18251) (Lactobacillus fermentum).